Here is a 3739-residue protein sequence, read N- to C-terminus: MSTVNEEKYLDYLRRATADLHEARGRLRELEAKAGEPVAIVGMACRLPGGVASPEDLWRLVAGGEDAISEFPQDRGWDVEGLYDPNPEATGKSYAREAGFLYEAGEFDADFFGISPREALAMDPQQRLLLEASWEAFEHAGIPAATARGTSVGVFTGVMYHDYATRLTDVPEGIEGYLGTGNSGSVASGRVAYTLGLEGPAVTVDTACSSSLVALHLAVQALRKGEVDMALAGGVTVMSTPSTFVEFSRQRGLAPDGRSKSFSSTADGTSWSEGVGVLLVERLSDARRKGHRILAVVRGTAVNQDGASSGLTAPNGPSQQRVIRRALADARLTTSDVDVVEAHGTGTRLGDPIEAQAVIATYGQGRDGEQPLRLGSLKSNIGHTQAAAGVSGVIKMVQAMRHGVLPKTLHVEKPTDQVDWSAGAVELLTEAMDWPDKGDGGLRRAAVSSFGVSGTNAHVVLEEAPAAEETPASEATPAVEPSVGAGLVPWLVSAKTPAALDAQIGRLAAFASQGRTDAADPGAVARVLAGGRAEFEHRAVVLGTGQDDFAQALTAPEGLIRGTPSDVGRVAFVFPGQGTQWAGMGAELLDVSKEFAAAMAECESALSRYVDWSLEAVVRQAPGAPTLERVDVVQPVTFAVMVSLAKVWQHHGVTPQAVVGHSQGEIAAAYVAGALTLDDAARVVTLRSKSIAAHLAGKGGMISLALSEEATRQRIENLHGLSIAAVNGPTATVVSGDPTQIQELAQACEADGVRARIIPVDYASHSAHVETIESELAEVLAGLSPRTPEVPFFSTLEGAWITEPVLDGTYWYRNLRHRVGFAPAVETLATDEGFTHFIEVSAHPVLTMTLPETVTGLGTLRREQGGQERLVTSLAEAWTNGLTIDWAPVLPTATGHHPELPTYAFQRRHYWLHDSPAVQGSVQDSWRYRIDWKRLAVADASERAGLSGRWLVVVPEDRSAEAAPVLAALSGAGADPVQLDVSPLGDRQRLAATLGEALAAAGGAVDGVLSLLAWDESAHPGHPAPFTRGTGATLTLVQALEDAGVAAPLWCVTHGAVSVGRADHVTSPAQAMVWGMGRVAALEHPERWGGLIDLPSDADRAALDRMTTVLAGGTGEDQVAVRASGLLARRLVRASLPAHGTASPWWQADGTVLVTGAEEPAAAEAARRLARDGAGHLLLHTTPSGSEGAEGTSGAAEDSGLAGLVAELADLGATATVVTCDLTDAEAAARLLAGVSDAHPLSAVLHLPPTVDSEPLAATDADALARVVTAKATAALHLDRLLREAAAAGGRPPVLVLFSSVAAIWGGAGQGAYAAGTAFLDALAGQHRADGPTVTSVAWSPWEGSRVTEGATGERLRRLGLRPLAPATALTALDTALGHGDTAVTIADVDWSSFAPGFTTARPGTLLADLPEARRALDEQQSTTAADDTVLSRELGALTGAEQQRRMQELVREHLAVVLNHPSPEAVDTGRAFRDLGFDSLTAVELRNRLKNATGLALPATLVFDYPTPRTLAEFLLAEILGEQAGAGEQLPVDGGVDDEPVAIVGMACRLPGGVASPEDLWRLVAGGEDAISGFPQDRGWDVEGLYDPDPDASGRTYCRAGGFLDEAGEFDADFFGISPREALAMDPQQRLLLETSWEAVEDAGIDPTSLQGQQVGVFAGTNGPHYEPLLRNTAEDLEGYVGTGNAASIMSGRVSYTLGLEGPAVTVDTACSSSLVALHLAVQALRKGECGLALAGGVTVMSTPTTFVEFSRQRGLAEDGRSKAFAASADGFGPAEGVGMLLVERLSDARRNGHRVLAVVRGSAVNQDGASNGLTAPNGPSQQRVIRRALADARLTTADVDVVEAHGTGTRLGDPIEAQALIATYGQGRDTEQPLRLGSLKSNIGHTQAAAGVSGIIKMVQAMRHGVLPKTLHVDRPSDQIDWSAGTVELLTEAMDWPRKQEGGLRRAAVSSFGISGTNAHIVLEEAPVDEDAPADEPSVGGVVPWLVSAKTPAALDAQIGRLAAFASQGRTDAADPGAVARVLAGGRAQFEHRAVALGTGQDDLAAALAAPEGLVRGVASGVGRVAFVFPGQGTQWAGMGAELLDVSKEFAAAMAECEAALAPYVDWSLEAVVRQAPGAPTLERVDVVQPVTFAVMVSLAKVWQHHGVTPQAVVGHSQGEIAAAYVAGALSLDDAARVVTLRSKSIGAHLAGQGGMLSLALSEAAVVERLAGFDGLSVAAVNGPTATVVSGDPTQIQELAQACEADGVRARIIPVDYASHSAHVETIESELADVLAGLSPQTPQVPFFSTLEGAWITEPALDGGYWYRNLRHRVGFAPAVETLATDEGFTHFVEVSAHPVLTMALPETVTGLGTLRRDNGGQHRLTTSLAEAWANGLTVDWASLLPTTTTHPDLPTYAFQTERYWPQPDLSAAGDITSAGLGAAEHPLLGAAVALADSDGCLLTGSLSLRTHPWLADHAVAGTVLLPGTAFVELAFRAGDQVGCDLVEELTLDAPLVLPRRGAVRVQLSVGASDESGRRTFGLYAHPEDAPGEAEWTRHATGVLAARADRTAPVADPEAWPPPGAEPVDVDGLYERFAANGYGYGPLFQGVRGVWRRGDEVFADVALPAEVAGAEGARFGLHPALLDAAVQAAGAGRGVRRGHAAAVRLERDLLYAVGATALRVRLAPAGPDTVSVSAADSSGQPVFAADSLTVLPVDPAQLAAFSDPTLDALHLLEWTAWDGAAQALPGAVVLGGDADGLAAALRAGGTEVLSFPDLTDLVEAVDRGETPAPATVLVACPAAGPDGPEHVREALHGSLALMQAWLADERFTDGRLVLVTRDAVAARSGDGLRSTGQAAVWGLGRSAQTESPGRFVLLDLAGEARTAGDATAGDGLTTGDATVGGTSGDAALGSALATALGSGEPQLALRDGALLVPRLARAAAPAAADGLAAADGLAALPLPAAPALWRLEPGTDGSLESLTAAPGDAETLAPEPLGPGQVRIAIRATGLNFRDVLIALGMYPDPALMGTEGAGVVTATGPGVTHLAPGDRVMGLLSGAYAPVVVADARTVARMPEGWTFAQGASVPVVFLTAVYALRDLADVKPGERLLVHSAAGGVGMAAVQLARHWGVEVHGTASHGKWDALRALGLDDAHIASSRTLDFESAFRAASGGAGMDVVLNSLAREFVDASLRLLGPGGRFVEMGKTDVRDAERVAADHPGVGYRAFDLGEAGPERIGEMLAEVIALFEDGVLRHLPVTTWDVRRARDAFRHVSQARHTGKVVLTMPSGLDPEGTVLLTGGTGALGGIVARHVVGEWGVRRLLLVSRRGTDAPGAGELVHELEALGADVSVAACDVADREALTAVLDSIPAEHPLTAVVHTAGVLSDGTLPSMTAEDVEHVLRPKVDAAFLLDELTSTPGYDLAAFVMFSSAAAVFGGAGQGAYAAANATLDALAWRRRTAGLPALSLGWGLWAETSGMTGGLSDTDRSRLARSGATPMDSELTLSLLDAAMRRDDPALVPIALDVAALRAQQRDGMLAPLLSGLTRGSRVGGAPVNQRRAAAGGAGEADTDLGGRLAAMTPDDRVAHLRDLVRTHVATVLGHGTPSRVDLERAFRDTGFDSLTAVELRNRLNAATGLRLPATLVFDHPTPGELAGHLLDELATAAGGSWAEGTGSGDTASATDRQTTAALAELDRLEGVLASLAPAAGGRPELAARLRALAAALGDDGDDATDLDEASDDDLFSFIDKELGDSDF.

One can recognise a Ketosynthase family 3 (KS3) 1 domain in the interval 35–463 (GEPVAIVGMA…GTNAHVVLEE (429 aa)). 2 module regions span residues 38–1517 (VAIV…EFLL) and 1542–3642 (VAIV…GHLL). The active-site Acyl-thioester intermediate; for beta-ketoacyl synthase 1 activity is cysteine 208. Catalysis depends on for beta-ketoacyl synthase 1 activity residues histidine 343 and histidine 383. Residues 572–877 (FVFPGQGTQW…ERLVTSLAEA (306 aa)) form an acyltransferase 1 region. Serine 662 acts as the Acyl-ester intermediate; for acyltransferase 1 activity in catalysis. The C2-type beta-ketoacyl reductase 1 stretch occupies residues 1150–1343 (GTVLVTGAEE…VTSVAWSPWE (194 aa)). Residue tyrosine 1313 is the For C2-type beta-ketoacyl reductase 1 and probable racemase activities of the active site. One can recognise a Carrier 1 domain in the interval 1445–1520 (RRMQELVREH…TLAEFLLAEI (76 aa)). Serine 1480 bears the O-(pantetheine 4'-phosphoryl)serine mark. In terms of domain architecture, Ketosynthase family 3 (KS3) 2 spans 1539-1967 (DEPVAIVGMA…GTNAHIVLEE (429 aa)). The Acyl-thioester intermediate; for beta-ketoacyl synthase 2 activity role is filled by cysteine 1712. Residues histidine 1847 and histidine 1887 each act as for beta-ketoacyl synthase 2 activity in the active site. Positions 2069–2374 (FVFPGQGTQW…HRLTTSLAEA (306 aa)) are acyltransferase 2. Catalysis depends on serine 2159, which acts as the Acyl-ester intermediate; for acyltransferase 2 activity. The interval 2428 to 2553 (HPLLGAAVAL…GVLAARADRT (126 aa)) is N-terminal hotdog fold. Residues 2428-2703 (HPLLGAAVAL…LTVLPVDPAQ (276 aa)) form a dehydratase region. Residues 2428 to 2705 (HPLLGAAVAL…VLPVDPAQLA (278 aa)) form the PKS/mFAS DH domain. The active-site Proton acceptor; for dehydratase activity is histidine 2460. A C-terminal hotdog fold region spans residues 2567-2705 (AEPVDVDGLY…VLPVDPAQLA (139 aa)). Aspartate 2629 serves as the catalytic Proton donor; for dehydratase activity. The enoyl reductase stretch occupies residues 2959-3267 (GSLESLTAAP…QARHTGKVVL (309 aa)). Residue tyrosine 3005 is the For enoyl reductase activity of the active site. NADP(+) is bound by residues 3092-3109 (LLVH…VQLA), 3285-3288 (TGAL), 3309-3312 (SRRG), 3338-3339 (DV), lysine 3388, and 3412-3413 (FS). A beta-ketoacyl reductase 2 region spans residues 3277–3458 (GTVLLTGGTG…LSLGWGLWAE (182 aa)). The For beta-ketoacyl reductase 2 activity role is filled by tyrosine 3427. Residues 3570-3645 (AHLRDLVRTH…ELAGHLLDEL (76 aa)) enclose the Carrier 2 domain. At serine 3605 the chain carries O-(pantetheine 4'-phosphoryl)serine.

As to quaternary structure, homodimer. Pikromycin PKS consists of a combination of multimodular (PikAI and PikAII) and monomodular (PikAIII and PikAIV) polypeptides each coding for a functional synthase subunit which participates in 1 (monomodular) or 2 (multimodular) of the six FAS-like elongation steps required for formation of the polyketide. Module 1, 2, 3, 4, 5, and 6 participating in biosynthesis steps 1, 2, 3, 4, 5, and 6, respectively. Requires pantetheine 4'-phosphate as cofactor.

It catalyses the reaction 5 (S)-methylmalonyl-CoA + malonyl-CoA + 5 NADPH + 11 H(+) = 10-deoxymethynolide + 6 CO2 + 5 NADP(+) + 6 CoA + 2 H2O. The enzyme catalyses 6 (S)-methylmalonyl-CoA + malonyl-CoA + 5 NADPH + 12 H(+) = narbonolide + 7 CO2 + 5 NADP(+) + 7 CoA + 2 H2O. Its pathway is antibiotic biosynthesis. Involved in the biosynthesis of 12- and 14-membered ring macrolactone antibiotics such as methymycin/neomethymycin and pikromycin/narbomycin, respectively. Component of the pikromycin PKS which catalyzes the biosynthesis of both precursors 10-deoxymethynolide (12-membered ring macrolactone) and narbonolide (14-membered ring macrolactone). Chain elongation through PikAI, PikAII and PikAIII followed by thioesterase catalyzed termination results in the production of 10-deoxymethynolide, while continued elongation through PikAIV, followed by thioesterase (TE) catalyzed cyclization results in the biosynthesis of the narbonolide. The sequence is that of Pikromycin polyketide synthase component PikAII from Streptomyces venezuelae.